Here is a 741-residue protein sequence, read N- to C-terminus: Prestin (741 aa).

Topologically, residues 1-79 (MDHVEETEIL…WLPAYRFKEY (79 aa)) are cytoplasmic. Residues 80–105 (VLGDIVSGISTGVLQLPQGLAFAMLA) form a helical membrane-spanning segment. The Extracellular portion of the chain corresponds to 106–109 (AVPP). Residues 110-125 (VFGLYSSFYPVIMYCF) form a helical membrane-spanning segment. Residues 126–137 (FGTSRHISIGPF) are Cytoplasmic-facing. The chain crosses the membrane as a helical span at residues 138-147 (AVISLMIGGV). At 148 to 178 (AVRLVPDDIVIPGGVNATNSTEARDALRVKV) the chain is on the extracellular side. The Involved in motor function signature appears at 158–168 (IPGGVNATNST). N-linked (GlcNAc...) asparagine glycans are attached at residues asparagine 163 and asparagine 166. Transmembrane regions (helical) follow at residues 179–208 (AMSV…LTEP) and 209–230 (LVRG…KYLF). Residues 231–243 (GVKTKRYSGIFSV) lie on the Extracellular side of the membrane. The helical intramembrane region spans 244–248 (VYSTV). The Extracellular segment spans residues 249 to 261 (AVLQNVKNLNVCS). Residues 262-283 (LGVGLMVFGLLLGGKEFNERFK) form a helical membrane-spanning segment. Residues 284-291 (EKLPAPIP) are Cytoplasmic-facing. The helical transmembrane segment at 292–303 (LEFFAVVMGTGI) threads the bilayer. Topologically, residues 304-338 (SAGFSLHESYNVDVVGTLPLGLLPPANPDTSLFHL) are extracellular. The chain crosses the membrane as a helical span at residues 339–361 (VYVDAIAIAIVGFSVTISMAKTL). Topologically, residues 362-370 (ANKHGYQVD) are cytoplasmic. Residues 371–388 (GNQELIALGLCNSTGSLF) form a helical membrane-spanning segment. Residues 389–396 (QTFAISCS) are Extracellular-facing. A helical transmembrane segment spans residues 397–406 (LSRSLVQEGT). Salicylate is bound at residue serine 398. Over 407 to 410 (GGKT) the chain is Cytoplasmic. The chain crosses the membrane as a helical span at residues 411 to 429 (QLAGCLASLMILLVILATG). At 430-436 (FLFESLP) the chain is on the extracellular side. Residues 437-459 (QAVLSAIVIVNLKGMFMQFSDLP) form a helical membrane-spanning segment. The Cytoplasmic segment spans residues 460–467 (FFWRTSKI). Residues 468–483 (ELTIWLTTFVSSLFLG) traverse the membrane as a helical segment. Position 484 (leucine 484) is a topological domain, extracellular. The helical transmembrane segment at 485-498 (DYGLITAVIIALMT) threads the bilayer. Residues 499–741 (VIYRTQSPSY…DSEPNATPEA (243 aa)) lie on the Cytoplasmic side of the membrane. The extended region for STAS domain stretch occupies residues 505–718 (SPSYIVLGQL…AVLGSQVREA (214 aa)). The region spanning 525-713 (AYEEVKEVPG…HSIHDAVLGS (189 aa)) is the STAS domain. The segment at 718-741 (ALAEQEATAAPPQEDSEPNATPEA) is disordered. A compositionally biased stretch (low complexity) spans 721–730 (EQEATAAPPQ).

Belongs to the SLC26A/SulP transporter (TC 2.A.53) family. Homodimer. Interacts (via STAS domain) with CALM; this interaction is calcium-dependent and the STAS domain interacts with only one lobe of CALM which is an elongated conformation.

The protein resides in the cell membrane. The enzyme catalyses 2 hydrogencarbonate(in) + chloride(out) = 2 hydrogencarbonate(out) + chloride(in). Voltage-sensitive motor protein that drives outer hair cell (OHC) electromotility (eM) and participates in sound amplification in the hearing organ. Converts changes in the transmembrane electric potential into mechanical displacements resulting in the coupling of its expansion to movement of a charged voltage sensor across the lipid membrane. The nature of the voltage sensor is not completely clear, and two models compete. In the first model, acts as an incomplete transporter where intracellular chloride anion acts as extrinsic voltage sensor that drives conformational change in the protein which is sufficient to produce a length change in the plane of the membrane and hence in the length of the OHC. The second model in which multiple charged amino acid residues are distributed at the intracellular and extracellular membrane interfaces that form an intrinsic voltage sensor, whose movement produces the non-linear capacitance (NLC). However, the effective voltage sensor may be the result of a hybrid voltage sensor assembled from intrinsic charge (charged residues) and extrinsic charge (bound anion). Notably, binding of anions to the anion-binding pocket partially neutralizes the intrinsic positive charge rather than to form an electrically negative sensor, therefore remaining charge may serve as voltage sensor that, after depolarization, moves from down (expanded state) to up (contracted) conformation, which is accompanied by an eccentric contraction of the intermembrane cross-sectional area of the protein as well as a major increase in the hydrophobic thickness of the protein having as consequences the plasma membrane thickening and the cell contraction after membrane depolarization. The anion-binding pocket transits from the inward-open (Down) state, where it is exposed toward the intracellular solvent in the absence of anion, to the occluded (Up) state upon anion binding. Salicylate competes for the anion-binding site and inhibits the voltage-sensor movement, and therefore inhibits the charge transfer and electromotility by displacing Cl(-) from the anion-binding site and by preventing the structural transitions to the contracted state. In addition, can act as a weak Cl(-)/HCO3 (-) antiporter across the cell membrane and so regulate the intracellular pH of the outer hair cells (OHCs), while firstly found as being unable to mediate electrogenic anion transport. Moreover, supports a role in cardiac mechanical amplification serving as an elastic element to enhance the actomyosin- based sarcomere contraction system. In Tursiops truncatus (Atlantic bottle-nosed dolphin), this protein is Prestin.